The chain runs to 131 residues: Small ribosomal subunit protein uS8 (131 aa).

This sequence belongs to the universal ribosomal protein uS8 family. In terms of assembly, part of the 30S ribosomal subunit. Contacts proteins S5 and S12.

One of the primary rRNA binding proteins, it binds directly to 16S rRNA central domain where it helps coordinate assembly of the platform of the 30S subunit. This is Small ribosomal subunit protein uS8 from Parabacteroides distasonis (strain ATCC 8503 / DSM 20701 / CIP 104284 / JCM 5825 / NCTC 11152).